Here is a 207-residue protein sequence, read N- to C-terminus: U1 small nuclear ribonucleoprotein C (207 aa).

The Matrin-type zinc finger occupies 4–36; it reads YYCDYCDTYLTHDSPSVRKQHNAGYKHKANVRI. Composition is skewed to pro residues over residues 105-115 and 122-131; these read PPQGYMPPPGV and PGAPLPPPPQ. The tract at residues 105–207 is disordered; that stretch reads PPQGYMPPPG…PSAESPESNE (103 aa). The segment covering 132-144 has biased composition (low complexity); that stretch reads NGILRPPGMAPIP. Pro residues predominate over residues 162–183; sequence GPPPNYNGLPPPPPYHTNPAAP. Residues 184–207 show a composition bias toward low complexity; the sequence is PSGNFNNPNLNNPNPSAESPESNE.

It belongs to the U1 small nuclear ribonucleoprotein C family. In terms of assembly, U1 snRNP is composed of the 7 core Sm proteins B/B', D1, D2, D3, E, F and G that assemble in a heptameric protein ring on the Sm site of the small nuclear RNA to form the core snRNP, and at least 3 U1 snRNP-specific proteins U1-70K, U1-A and U1-C. U1-C interacts with U1 snRNA and the 5' splice-site region of the pre-mRNA.

The protein localises to the nucleus. Functionally, component of the spliceosomal U1 snRNP, which is essential for recognition of the pre-mRNA 5' splice-site and the subsequent assembly of the spliceosome. U1-C is directly involved in initial 5' splice-site recognition for both constitutive and regulated alternative splicing. The interaction with the 5' splice-site seems to precede base-pairing between the pre-mRNA and the U1 snRNA. Stimulates commitment or early (E) complex formation by stabilizing the base pairing of the 5' end of the U1 snRNA and the 5' splice-site region. The sequence is that of U1 small nuclear ribonucleoprotein C from Arabidopsis thaliana (Mouse-ear cress).